The primary structure comprises 1157 residues: Pesticidal crystal protein Cry9Ca (1157 aa).

It belongs to the delta endotoxin family.

In terms of biological role, promotes colloidosmotic lysis by binding to the midgut epithelial cells of Lepidoptera larvae. Has a fairly broad spectrum of activity against members of the Pyralidae, Plutellidae, Sphingidae and Noctuidae families. It was the first insecticidal crystal protein characterized with activity against cutworms. No activity is observed against some beetles, such as the Colorado potato beetle. This chain is Pesticidal crystal protein Cry9Ca (cry9Ca), found in Bacillus thuringiensis subsp. tolworthi.